The primary structure comprises 202 residues: Sterile alpha motif domain-containing protein 10 (202 aa).

Residues W118–R184 enclose the SAM domain.

The sequence is that of Sterile alpha motif domain-containing protein 10 (SAMD10) from Homo sapiens (Human).